We begin with the raw amino-acid sequence, 204 residues long: Guanylate kinase (204 aa).

The Guanylate kinase-like domain occupies 5–184; sequence GLLIVLSGPS…ACDKIKAIVL (180 aa). 12–19 is a binding site for ATP; it reads GPSGVGKG.

Belongs to the guanylate kinase family.

The protein resides in the cytoplasm. It catalyses the reaction GMP + ATP = GDP + ADP. Essential for recycling GMP and indirectly, cGMP. This chain is Guanylate kinase (gmk), found in Bacillus subtilis (strain 168).